The chain runs to 501 residues: 25-hydroxyvitamin D-1 alpha hydroxylase, mitochondrial (501 aa).

C448 lines the heme pocket.

Belongs to the cytochrome P450 family. Heme is required as a cofactor. In terms of tissue distribution, kidney.

The protein localises to the mitochondrion membrane. It carries out the reaction calcidiol + 2 reduced [adrenodoxin] + O2 + 2 H(+) = calcitriol + 2 oxidized [adrenodoxin] + H2O. It catalyses the reaction secalciferol + 2 reduced [adrenodoxin] + O2 + 2 H(+) = calcitetrol + 2 oxidized [adrenodoxin] + H2O. It functions in the pathway hormone biosynthesis; cholecalciferol biosynthesis. Functionally, catalyzes the conversion of 25-hydroxyvitamin D3 (25(OH)D3) to 1-alpha,25-dihydroxyvitamin D3 (1alpha,25(OH)(2)D3), and of 24,25-dihydroxyvitamin D3 (24,25(OH)(2)D3) to 1-alpha,24,25-trihydroxyvitamin D3 (1alpha,24,25(OH)(3)D3). Is also active with 25-hydroxy-24-oxo-vitamin D3. Plays an important role in normal bone growth, calcium metabolism, and tissue differentiation. In Rattus norvegicus (Rat), this protein is 25-hydroxyvitamin D-1 alpha hydroxylase, mitochondrial (Cyp27b1).